Reading from the N-terminus, the 203-residue chain is Thymidylate kinase (203 aa).

7–14 (GGEGAGKT) lines the ATP pocket.

The protein belongs to the thymidylate kinase family.

It carries out the reaction dTMP + ATP = dTDP + ADP. Its function is as follows. Phosphorylation of dTMP to form dTDP in both de novo and salvage pathways of dTTP synthesis. This chain is Thymidylate kinase (tmk), found in Chlamydia trachomatis serovar D (strain ATCC VR-885 / DSM 19411 / UW-3/Cx).